Reading from the N-terminus, the 777-residue chain is MEIDELTALGGLLHDIGKPVQRAGLYSGDHSTQGARFLRDLAENTGRAEYELLSLFSEFHHKGHMKNDELMIRRIKELSPERFGLTMEDVLNALWIVYEADNLASGEREEGQPQASRPLYSVFNPGKAYPWAELDFEKELPVPGDVFSIRSQDYRELVKRLWEELSKAKLRSDRLLPVLEKYLTFVSSVTSEGNIISLYDHMRMTSAIALAMLRAGCTAEDVRSGRCRKEKRFLLIEGDFSGIQDFIYRVSGKGTLKYLRARSAYLELIGWDVVLEILSRLGLTRANVVFNAGGHFMIIAQNTPDAVKELEEIRAKAVEWLYREFESDLYLAIEWEPVSGREFGREGGKNLFAEARKRLKHKLTVRKLKRFGEIKGLFEHGHTERLAECPVCGRELPEGKLEPSASDPETKVCPTCNRLVSLGGNLPKLLGFGRTAKNDAGVLVEGPFSGFVPYLQGGRPVGEQILVKNTLNPGEIPESAQFVPYFVADYFKKDPKGGVATFEELSMASTGTRRLGVMKGDVDRLGEFFSSMDSPSKLATASRFMDYFFKGYIGAIIEGKFGYIIGDVPSLRDWPEEPDIVVVYAGGDDFFIVGAWDQIFELAFRVRRAFNAYTGGKLTLSVGLGYFDERTPIYRMADVVSERLDTAKDEGRNRVFVVGRSRPLDGKHKLSYEWNHYEELWRTYAPRIYAGNGRLKGKLESKKGLLWKLLEIRELYVRDPNDVRWAYLTAYLLGRHGLSDLFPELVGIDTKAVERKEPQPVYWVDGVLKIVLMAVRR.

One can recognise an HD domain in the interval 1 to 106; sequence MEIDELTALG…VYEADNLASG (106 aa). One can recognise a GGDEF domain in the interval 513 to 660; it reads RRLGVMKGDV…GRNRVFVVGR (148 aa).

It belongs to the CRISPR-associated Cas10/Csm1 family. Probably part of the Csm effector complex, that includes Cas10, Csm2, Csm3, Csm4, Csm5 and mature crRNA. Will form a homodimer in solution, interacts with Csm4, which is a tighter, better association than the homodimeric Cas10 and uses the same interface for interaction. A divalent metal cation serves as cofactor.

With respect to regulation, ssDNase activity is inhibited by EDTA. In terms of biological role, CRISPR (clustered regularly interspaced short palindromic repeat) is an adaptive immune system that provides protection against mobile genetic elements (viruses, transposable elements and conjugative plasmids). CRISPR clusters contain spacers, sequences complementary to antecedent mobile elements, and target invading nucleic acids. CRISPR clusters are transcribed and processed into CRISPR RNA (crRNA). The type III-A Csm effector complex binds crRNA and acts as a crRNA-guided RNase, DNase and cyclic oligoadenylate synthase; binding of target RNA cognate to the crRNA is required for all activities. Functionally, a single-strand deoxyribonuclease (ssDNase) which digests linear and circular ssDNA; has 5'-3' and 3'-5' exonuclease activity as well as a less efficient endonuclease activity. Has a minimal size requirement; 100 nucleotide ssDNA (nt) is more efficiently digested than 50 or 25 nt ssDNA, while 14 nt ssDNA is not cleaved at all. It has no activity on dsDNA or ssRNA. Its function is as follows. ssDNase activity is stimulated in the ternary Csm effector complex; binding of cognate target RNA activates the ssDNase, as the target RNA is degraded ssDNA activity decreases. When associated with the ternary Csm effector complex (the crRNA, Cas proteins and a cognate target ssRNA) synthesizes cyclic oligoadenylates (cOA) from ATP. cOAs are second messengers that stimulate the ssRNase activity of Csm6, inducing an antiviral state important for defense against invading nucleic acids. The chain is CRISPR system single-strand-specific deoxyribonuclease Cas10/Csm1 (subtype III-A) from Thermococcus onnurineus (strain NA1).